Here is a 625-residue protein sequence, read N- to C-terminus: Glucose dehydrogenase [FAD, quinone] (625 aa).

The N-terminal stretch at 1–42 is a signal peptide; the sequence is MSASASACDCLVGVPTGPTLASTCGGSAFMLFMGLLEVFIRS. 66–95 is an FAD binding site; that stretch reads DFIVIGGGSAGSVVASRLSEVPQWKVLLIE. His-544 (proton acceptor) is an active-site residue. Residue Sec-613 is a non-standard amino acid, selenocysteine.

This sequence belongs to the GMC oxidoreductase family. It depends on FAD as a cofactor.

The protein resides in the secreted. It catalyses the reaction a quinone + D-glucose = D-glucono-1,5-lactone + a quinol. Its function is as follows. Essential for cuticular modification during development. This is Glucose dehydrogenase [FAD, quinone] (Gld) from Drosophila melanogaster (Fruit fly).